A 140-amino-acid chain; its full sequence is Large ribosomal subunit protein bL17 (140 aa).

This sequence belongs to the bacterial ribosomal protein bL17 family. Part of the 50S ribosomal subunit. Contacts protein L32.

The chain is Large ribosomal subunit protein bL17 from Hyphomonas neptunium (strain ATCC 15444).